A 63-amino-acid polypeptide reads, in one-letter code: Translational regulator CsrA (63 aa).

This sequence belongs to the CsrA/RsmA family. In terms of assembly, homodimer; the beta-strands of each monomer intercalate to form a hydrophobic core, while the alpha-helices form wings that extend away from the core.

The protein resides in the cytoplasm. Its function is as follows. A key translational regulator that binds mRNA to regulate translation initiation and/or mRNA stability. Mediates global changes in gene expression, shifting from rapid growth to stress survival by linking envelope stress, the stringent response and the catabolite repression systems. Usually binds in the 5'-UTR; binding at or near the Shine-Dalgarno sequence prevents ribosome-binding, repressing translation, binding elsewhere in the 5'-UTR can activate translation and/or stabilize the mRNA. Its function is antagonized by small RNA(s). The chain is Translational regulator CsrA from Haemophilus influenzae (strain 86-028NP).